Here is an 85-residue protein sequence, read N- to C-terminus: Large ribosomal subunit protein eL34 (85 aa).

It belongs to the eukaryotic ribosomal protein eL34 family.

In Saccharolobus islandicus (strain M.16.27) (Sulfolobus islandicus), this protein is Large ribosomal subunit protein eL34.